Reading from the N-terminus, the 834-residue chain is Protein translocase subunit SecA (834 aa).

Residues Q85, 103-107 (GEGKT), and D491 contribute to the ATP site. Zn(2+)-binding residues include C818, C820, C829, and C830.

The protein belongs to the SecA family. Monomer and homodimer. Part of the essential Sec protein translocation apparatus which comprises SecA, SecYEG and auxiliary proteins SecDF. Other proteins may also be involved. The cofactor is Zn(2+).

The protein localises to the cell membrane. It is found in the cytoplasm. It catalyses the reaction ATP + H2O + cellular proteinSide 1 = ADP + phosphate + cellular proteinSide 2.. Functionally, part of the Sec protein translocase complex. Interacts with the SecYEG preprotein conducting channel. Has a central role in coupling the hydrolysis of ATP to the transfer of proteins into and across the cell membrane, serving as an ATP-driven molecular motor driving the stepwise translocation of polypeptide chains across the membrane. The chain is Protein translocase subunit SecA from Clostridium kluyveri (strain ATCC 8527 / DSM 555 / NBRC 12016 / NCIMB 10680 / K1).